We begin with the raw amino-acid sequence, 141 residues long: Nucleoside diphosphate kinase (141 aa).

ATP-binding residues include Lys9, Phe57, Arg85, Thr91, Arg102, and Asn112. His115 functions as the Pros-phosphohistidine intermediate in the catalytic mechanism.

The protein belongs to the NDK family. Homotetramer. Mg(2+) serves as cofactor.

The protein localises to the cytoplasm. The catalysed reaction is a 2'-deoxyribonucleoside 5'-diphosphate + ATP = a 2'-deoxyribonucleoside 5'-triphosphate + ADP. It catalyses the reaction a ribonucleoside 5'-diphosphate + ATP = a ribonucleoside 5'-triphosphate + ADP. Major role in the synthesis of nucleoside triphosphates other than ATP. The ATP gamma phosphate is transferred to the NDP beta phosphate via a ping-pong mechanism, using a phosphorylated active-site intermediate. The protein is Nucleoside diphosphate kinase of Chlamydia caviae (strain ATCC VR-813 / DSM 19441 / 03DC25 / GPIC) (Chlamydophila caviae).